The sequence spans 153 residues: 4'-phosphopantetheinyl transferase B, mitochondrial (153 aa).

Belongs to the P-Pant transferase superfamily.

The protein resides in the mitochondrion. It catalyses the reaction apo-[ACP] + CoA = holo-[ACP] + adenosine 3',5'-bisphosphate + H(+). Acyl-carrier-protein synthase transfers the 4'-phosphopantetheine moiety from coenzyme A to a Ser of an acyl-carrier-protein. The 4'-phosphopantetheine (4'-PPT) portion of CoA provides the essential prosthetic group for a number of carrier proteins and multi-domain enzymes, priming them for the acceptance of acyl building blocks in fatty acid synthesis and many aspects of secondary metabolism mediated by polyketide synthases (PKSs) and non-ribosomal peptide synthetases (NRPSs). PptB is specific for the mitochondrial acyl carrier protein acpA. This Aspergillus fumigatus (strain ATCC MYA-4609 / CBS 101355 / FGSC A1100 / Af293) (Neosartorya fumigata) protein is 4'-phosphopantetheinyl transferase B, mitochondrial.